The primary structure comprises 241 residues: 3-dehydroquinate dehydratase (241 aa).

Residues 35–37 and arginine 70 contribute to the 3-dehydroquinate site; that span reads ELR. The active-site Proton donor/acceptor is histidine 132. The Schiff-base intermediate with substrate role is filled by lysine 159. Residues arginine 201 and glutamine 224 each coordinate 3-dehydroquinate.

Belongs to the type-I 3-dehydroquinase family. In terms of assembly, homodimer.

The catalysed reaction is 3-dehydroquinate = 3-dehydroshikimate + H2O. It functions in the pathway metabolic intermediate biosynthesis; chorismate biosynthesis; chorismate from D-erythrose 4-phosphate and phosphoenolpyruvate: step 3/7. Its function is as follows. Involved in the third step of the chorismate pathway, which leads to the biosynthesis of aromatic amino acids. Catalyzes the cis-dehydration of 3-dehydroquinate (DHQ) and introduces the first double bond of the aromatic ring to yield 3-dehydroshikimate. The protein is 3-dehydroquinate dehydratase of Staphylococcus carnosus (strain TM300).